The following is a 285-amino-acid chain: MEMO1 family protein Igni_0992 (285 aa).

This sequence belongs to the MEMO1 family.

The polypeptide is MEMO1 family protein Igni_0992 (Ignicoccus hospitalis (strain KIN4/I / DSM 18386 / JCM 14125)).